The following is a 304-amino-acid chain: tRNA uridine(34) hydroxylase (304 aa).

The region spanning 124-219 (QDEETLLIDT…YLETIPKEES (96 aa)) is the Rhodanese domain. Cys179 acts as the Cysteine persulfide intermediate in catalysis.

It belongs to the TrhO family.

The enzyme catalyses uridine(34) in tRNA + AH2 + O2 = 5-hydroxyuridine(34) in tRNA + A + H2O. Functionally, catalyzes oxygen-dependent 5-hydroxyuridine (ho5U) modification at position 34 in tRNAs. The protein is tRNA uridine(34) hydroxylase of Bartonella quintana (strain Toulouse) (Rochalimaea quintana).